A 307-amino-acid chain; its full sequence is Protoheme IX farnesyltransferase (307 aa).

The next 8 membrane-spanning stretches (helical) occupy residues 24-44, 52-72, 115-135, 152-172, 179-199, 224-244, 245-265, and 284-304; these read ISLL…VGLV, PVIA…AGAL, VVLG…TIFF, IVIG…AASG, VILV…LSLY, QILL…MLGE, AGLA…LLAV, and FGFS…EALV.

It belongs to the UbiA prenyltransferase family. Protoheme IX farnesyltransferase subfamily.

The protein resides in the cell inner membrane. The enzyme catalyses heme b + (2E,6E)-farnesyl diphosphate + H2O = Fe(II)-heme o + diphosphate. The protein operates within porphyrin-containing compound metabolism; heme O biosynthesis; heme O from protoheme: step 1/1. Converts heme B (protoheme IX) to heme O by substitution of the vinyl group on carbon 2 of heme B porphyrin ring with a hydroxyethyl farnesyl side group. In Azorhizobium caulinodans (strain ATCC 43989 / DSM 5975 / JCM 20966 / LMG 6465 / NBRC 14845 / NCIMB 13405 / ORS 571), this protein is Protoheme IX farnesyltransferase.